The following is a 341-amino-acid chain: MDGEVLANKSCCGAVVTAFSVIGIVFTILKFTSFASFVYKTFFAKGVKLSVYGAKKGYWAVVTGATDGIGKEYATQLAMSGFNVVLISRTQEKLDALAKELETVAKVKTRTIAIDYTKTTAETFEKLHQDLVGTPITVLINNVGQSHYMPTSFAETTVKEMDDIMHINCFGTLHTTKAVLSIMLRERQKNEKGPRCLILTMGSFAGLLPSPYLSTYAGSKAFLSNWSASLGEEVKKQGIDVWCFNSYLVVSAMSKVRRPTLTIPTPKKFVRAALSSIGLQRGGTNPYISQPYPSHAVMSWSLEQLLGSAKGFVVSQVAAMHLSIRKRALRKEARLQAQNQA.

A helical transmembrane segment spans residues Val-15–Ala-35. Positions 61, 115, 142, 177, 216, 220, 249, and 251 each coordinate NADP(+). Tyr-216 acts as the Proton donor in catalysis. Lys-220 functions as the Lowers pKa of active site Tyr in the catalytic mechanism.

It belongs to the short-chain dehydrogenases/reductases (SDR) family.

The protein resides in the endoplasmic reticulum membrane. It catalyses the reaction a very-long-chain (3R)-3-hydroxyacyl-CoA + NADP(+) = a very-long-chain 3-oxoacyl-CoA + NADPH + H(+). It participates in lipid metabolism; fatty acid biosynthesis. In terms of biological role, component of the microsomal membrane bound fatty acid elongation system, which produces the 26-carbon very long-chain fatty acids (VLCFA) from palmitate. Catalyzes the reduction of the 3-ketoacyl-CoA intermediate that is formed in each cycle of fatty acid elongation. VLCFAs serve as precursors for ceramide and sphingolipids. In Schizosaccharomyces pombe (strain 972 / ATCC 24843) (Fission yeast), this protein is Very-long-chain 3-oxoacyl-CoA reductase.